The primary structure comprises 101 residues: Putative pterin-4-alpha-carbinolamine dehydratase (101 aa).

The protein belongs to the pterin-4-alpha-carbinolamine dehydratase family.

The enzyme catalyses (4aS,6R)-4a-hydroxy-L-erythro-5,6,7,8-tetrahydrobiopterin = (6R)-L-erythro-6,7-dihydrobiopterin + H2O. In Ralstonia pickettii (strain 12J), this protein is Putative pterin-4-alpha-carbinolamine dehydratase.